Here is a 513-residue protein sequence, read N- to C-terminus: Maturase K (513 aa).

The protein belongs to the intron maturase 2 family. MatK subfamily.

The protein resides in the plastid. It is found in the chloroplast. Functionally, usually encoded in the trnK tRNA gene intron. Probably assists in splicing its own and other chloroplast group II introns. This Pinus resinosa (Red pine) protein is Maturase K.